The primary structure comprises 697 residues: MQTQEILRILRLPELSDLGQFFRSLSATTLVSVGALAAVLAYWLTHRPKALQPPCNLLKQSEEVEDGGGARRSVIGGCTQLLTHYYDDARTMYQVFRRGLSISGNGPCLGFRKPEQPYQWLSYQEVAKRAEFLGSGLLQHDCKVGTEQFVGVFAQNRPEWIIAELACYTYSMVVVPLYDTLGPGSISYIINTADICTVIVDKPHKATLLLEHVERKETPGLKLVILMEPFEDALRERGKKCGVDIKSMQAIEDCGRENHHAPVPPRPDDLSIVCFTSGTTGNPKGAMLTHGNVVADFSGFLKVTEKVIFPRQDDVLISFLPLAHMFERVIQSVVYCHGGRVGFFQGDIRLLSDDMKALRPTIFPVVPRLLNRMYDKIFHQADTSLKRWLLEFAAKRKQAEVRSGIIRNNSIWDELFFNKIQASLGGHVRMIVTGAAPASPTVLGFLRAALGCQVYEGYGQTECTAGCTFTTPGDWTSGHVGAPLPCNHIKLVDAEELNYWTCKGEGEICVKGPNVFKGYLKDEDRTKEALDSDGWLHTGDIGKWLPEGTLKIIDRKKHIFKLAQGEYVAPEKIENIYIRSEPVAQIYVHGDSLKAFLVGIVVPDPEVMPSWAQKKGIEGTYQELCMKKELKKAILDDMVMLGKESGLHSFEQVKAIYIHCDMFSVQNGLLTPTLKAKRPELREYFKKQIEELYLVSV.

A helical; Signal-anchor for type III membrane protein transmembrane segment spans residues 25 to 45 (LSATTLVSVGALAAVLAYWLT). Topologically, residues 46 to 697 (HRPKALQPPC…QIEELYLVSV (652 aa)) are cytoplasmic.

Belongs to the ATP-dependent AMP-binding enzyme family. Requires Mg(2+) as cofactor.

The protein resides in the mitochondrion outer membrane. Its subcellular location is the peroxisome membrane. It is found in the microsome membrane. The protein localises to the endoplasmic reticulum membrane. The catalysed reaction is a long-chain fatty acid + ATP + CoA = a long-chain fatty acyl-CoA + AMP + diphosphate. It catalyses the reaction (5Z,8Z,11Z,14Z)-eicosatetraenoate + ATP + CoA = (5Z,8Z,11Z,14Z)-eicosatetraenoyl-CoA + AMP + diphosphate. The enzyme catalyses 15-hydroxy-(5Z,8Z,11Z,13E)-eicosatetraenoate + ATP + CoA = 15-hydroxy-(5Z,8Z,11Z,13E)-eicosatetraenoyl-CoA + AMP + diphosphate. It carries out the reaction 12-hydroxy-(5Z,8Z,10E,14Z)-eicosatetraenoate + ATP + CoA = 12-hydroxy-(5Z,8Z,10E,14Z)-eicosatetraenoyl-CoA + AMP + diphosphate. The catalysed reaction is 5-hydroxy-(6E,8Z,11Z,14Z)-eicosatetraenoate + ATP + CoA = 5-hydroxy-(6E,8Z,11Z,14Z)-eicosatetraenoyl-CoA + AMP + diphosphate. It catalyses the reaction hexadecanoate + ATP + CoA = hexadecanoyl-CoA + AMP + diphosphate. The enzyme catalyses (E)-hexadec-2-enoate + ATP + CoA = (2E)-hexadecenoyl-CoA + AMP + diphosphate. Functionally, catalyzes the conversion of long-chain fatty acids to their active form acyl-CoA for both synthesis of cellular lipids, and degradation via beta-oxidation. Plays an important role in fatty acid metabolism in brain and the acyl-CoAs produced may be utilized exclusively for the synthesis of the brain lipid. The chain is Long-chain-fatty-acid--CoA ligase 6 (Acsl6) from Mus musculus (Mouse).